The primary structure comprises 490 residues: AP-5 complex subunit mu-1 (490 aa).

The MHD domain maps to 206-476 (KPQVSISITE…LISSDYYIWN (271 aa)).

This sequence belongs to the adaptor complexes medium subunit family. Probably part of the adaptor protein complex 5 (AP-5) a tetramer composed of AP5B1, AP5M1, AP5S1 and AP5Z1. As to expression, expressed in various tumor cell lines including Jurkat, Hep-G2 and HeLa.

The protein resides in the cytoplasm. It localises to the cytosol. It is found in the late endosome membrane. The protein localises to the lysosome membrane. In terms of biological role, as part of AP-5, a probable fifth adaptor protein complex it may be involved in endosomal transport. According to PubMed:18395520, it may play a role in cell death. This chain is AP-5 complex subunit mu-1 (AP5M1), found in Homo sapiens (Human).